A 171-amino-acid polypeptide reads, in one-letter code: AAF/I fimbrial subunit (171 aa).

Residues 1 to 28 form the signal peptide; that stretch reads MKTLKNMRRKNLCITLGLVSLLSRGANA.

The protein resides in the fimbrium. The polypeptide is AAF/I fimbrial subunit (aggA) (Escherichia coli).